A 446-amino-acid chain; its full sequence is Sensor-type histidine kinase PrrB (446 aa).

2 consecutive transmembrane segments (helical) span residues 19 to 39 (VVATAIGAAIPVLIVGTVVWV) and 151 to 171 (LLICTFAIGAAAVFAWLLAAF). The region spanning 172–222 (AVRPFKQLAEQTRSIDAGDEAPRVEVHGASEAIEIAEAMRGMLQRIWNEQN) is the HAMP domain. Residues 237 to 446 (VSSHELRTPL…RLVLRLPGPS (210 aa)) form the Histidine kinase domain. His-240 carries the phosphohistidine; by autocatalysis modification.

Post-translationally, autophosphorylated.

The protein localises to the cell membrane. The enzyme catalyses ATP + protein L-histidine = ADP + protein N-phospho-L-histidine.. Its function is as follows. Member of the two-component regulatory system PrrB/PrrA that is involved specifically in early intracellular multiplication of Mycobacterium and is essential for its viability. Functions as a sensor protein kinase which is autophosphorylated at a histidine residue and transfers its phosphate group to the conserved aspartic acid residue in the regulatory domain of PrrA. In turn, PrrA binds to the upstream promoter regions of target genes including itself to positively regulate their expression. The chain is Sensor-type histidine kinase PrrB (prrB) from Mycobacterium bovis (strain ATCC BAA-935 / AF2122/97).